Here is a 398-residue protein sequence, read N- to C-terminus: Acetate kinase (398 aa).

Residue asparagine 8 coordinates Mg(2+). Residue lysine 15 coordinates ATP. Substrate is bound at residue arginine 89. Aspartate 146 acts as the Proton donor/acceptor in catalysis. Residues 206-210 (HIGNG), 283-285 (DMR), and 331-335 (GMGEN) contribute to the ATP site. Glutamate 383 contributes to the Mg(2+) binding site.

It belongs to the acetokinase family. As to quaternary structure, homodimer. It depends on Mg(2+) as a cofactor. Requires Mn(2+) as cofactor.

It localises to the cytoplasm. The catalysed reaction is acetate + ATP = acetyl phosphate + ADP. It participates in metabolic intermediate biosynthesis; acetyl-CoA biosynthesis; acetyl-CoA from acetate: step 1/2. In terms of biological role, catalyzes the formation of acetyl phosphate from acetate and ATP. Can also catalyze the reverse reaction. The protein is Acetate kinase of Streptococcus pyogenes serotype M49 (strain NZ131).